The primary structure comprises 681 residues: PTS system glucose-specific EIICBA component (681 aa).

One can recognise a PTS EIIC type-1 domain in the interval 3 to 414 (KKLFGQLQRI…LKYKTPGRED (412 aa)). 10 helical membrane-spanning segments follow: residues 16–36 (LMLP…GTAM), 73–93 (MIFA…AAIA), 126–146 (ILGI…GALA), 170–190 (FVPI…ALIW), 199–219 (AFST…FGFI), 273–293 (FMQG…LAIY), 303–323 (VVAG…ITEP), 328–348 (FLFV…LSFL), 355–375 (LHLG…GILP), and 383–403 (VIPV…FLIV). Positions 425–506 (TELPYAVLEA…QQIMNGQVVE (82 aa)) constitute a PTS EIIB type-1 domain. C447 (phosphocysteine intermediate; for EIIB activity) is an active-site residue. Residues 551 to 655 (DQVFSEKMMG…SDITPIIVTQ (105 aa)) enclose the PTS EIIA type-1 domain. The active-site Tele-phosphohistidine intermediate; for EIIA activity is the H603.

The protein localises to the cell membrane. The catalysed reaction is N(pros)-phospho-L-histidyl-[protein] + D-glucose(out) = D-glucose 6-phosphate(in) + L-histidyl-[protein]. In terms of biological role, the phosphoenolpyruvate-dependent sugar phosphotransferase system (sugar PTS), a major carbohydrate active transport system, catalyzes the phosphorylation of incoming sugar substrates concomitantly with their translocation across the cell membrane. This system is involved in glucose transport. This chain is PTS system glucose-specific EIICBA component (ptsG), found in Staphylococcus aureus (strain bovine RF122 / ET3-1).